A 437-amino-acid polypeptide reads, in one-letter code: ATP-dependent RNA helicase SUB2 (437 aa).

Acidic residues predominate over residues 1-19 (MSHEAEEDLLEYSDNEQEV). The segment at 1-45 (MSHEAEEDLLEYSDNEQEVQVDNKATEVNAEGNGESQAKDSDKKG) is disordered. A Q motif motif is present at residues 53-81 (TGFKDFLLKPELSRAIIDCGFEHPSEVQQ). A Helicase ATP-binding domain is found at 84–259 (IPQSIHGTDV…RRFLQNPLEI (176 aa)). 97–104 (AKSGLGKT) is an ATP binding site. Residues 206 to 209 (DECD) carry the DECD box motif. In terms of domain architecture, Helicase C-terminal spans 287 to 432 (KLAQLLDDLE…EFPEEGVDPS (146 aa)).

This sequence belongs to the DEAD box helicase family. DECD subfamily.

It is found in the nucleus. The enzyme catalyses ATP + H2O = ADP + phosphate + H(+). Functionally, ATP-binding RNA helicase involved in transcription elongation and required for the export of mRNA out of the nucleus. SUB2 also plays a role in pre-mRNA splicing and spliceosome assembly. May be involved in rDNA and telomeric silencing, and maintenance of genome integrity. This chain is ATP-dependent RNA helicase SUB2 (SUB2), found in Kluyveromyces lactis (strain ATCC 8585 / CBS 2359 / DSM 70799 / NBRC 1267 / NRRL Y-1140 / WM37) (Yeast).